The sequence spans 186 residues: Protein GrpE (186 aa).

2 stretches are compositionally biased toward basic and acidic residues: residues 1 to 13 and 23 to 34; these read MSDN…EEQH and EETHQAEDAVEH. A disordered region spans residues 1–34; sequence MSDNKTELNEEQHNATAEGEVSEETHQAEDAVEH.

Belongs to the GrpE family. Homodimer.

Its subcellular location is the cytoplasm. Its function is as follows. Participates actively in the response to hyperosmotic and heat shock by preventing the aggregation of stress-denatured proteins, in association with DnaK and GrpE. It is the nucleotide exchange factor for DnaK and may function as a thermosensor. Unfolded proteins bind initially to DnaJ; upon interaction with the DnaJ-bound protein, DnaK hydrolyzes its bound ATP, resulting in the formation of a stable complex. GrpE releases ADP from DnaK; ATP binding to DnaK triggers the release of the substrate protein, thus completing the reaction cycle. Several rounds of ATP-dependent interactions between DnaJ, DnaK and GrpE are required for fully efficient folding. This Hydrogenovibrio crunogenus (strain DSM 25203 / XCL-2) (Thiomicrospira crunogena) protein is Protein GrpE.